A 552-amino-acid polypeptide reads, in one-letter code: Carotenoid cleavage dioxygenase 8 homolog A, chloroplastic (552 aa).

A chloroplast-targeting transit peptide spans 1–43 (MATSLTLIATPCTAPRSSSSFALAPRLPPRCSNATAARRRAVR). Positions 32-73 (SNATAARRRAVRATTLQSDQEPAGSGDSGATTTKLSASTSVR) are disordered. Polar residues predominate over residues 59-72 (SGATTTKLSASTSV). Residues His239, His289, His356, and His543 each contribute to the Fe cation site.

This sequence belongs to the carotenoid oxygenase family. Requires Fe(2+) as cofactor. As to expression, highly expressed in panicles, inflorescences and parenchyma cells of the root stele, and at lower levels in shoot apex, leaf buds and xylem parenchyma cells of the stem.

The protein resides in the plastid. It localises to the chloroplast. May be involved in strigolactones biosynthesis. The protein is Carotenoid cleavage dioxygenase 8 homolog A, chloroplastic (CCD8A) of Oryza sativa subsp. japonica (Rice).